The chain runs to 436 residues: uncharacterized protein (436 aa).

A signal peptide spans methionine 1–glycine 20. Coiled-coil stretches lie at residues glutamate 25–asparagine 87, methionine 154–glutamate 207, and glutamate 247–leucine 329. Residues glutamate 371–serine 390 show a composition bias toward acidic residues. Positions glutamate 371–arginine 419 are disordered. The segment covering arginine 404–serine 415 has biased composition (basic and acidic residues).

As to expression, component of the acid-insoluble organic matrix of the aragonitic skeleton (at protein level).

The protein localises to the secreted. This is an uncharacterized protein from Acropora millepora (Staghorn coral).